A 241-amino-acid chain; its full sequence is 2-C-methyl-D-erythritol 4-phosphate cytidylyltransferase (241 aa).

Belongs to the IspD/TarI cytidylyltransferase family. IspD subfamily.

It catalyses the reaction 2-C-methyl-D-erythritol 4-phosphate + CTP + H(+) = 4-CDP-2-C-methyl-D-erythritol + diphosphate. It functions in the pathway isoprenoid biosynthesis; isopentenyl diphosphate biosynthesis via DXP pathway; isopentenyl diphosphate from 1-deoxy-D-xylulose 5-phosphate: step 2/6. Its function is as follows. Catalyzes the formation of 4-diphosphocytidyl-2-C-methyl-D-erythritol from CTP and 2-C-methyl-D-erythritol 4-phosphate (MEP). The protein is 2-C-methyl-D-erythritol 4-phosphate cytidylyltransferase of Pseudoalteromonas translucida (strain TAC 125).